Here is a 361-residue protein sequence, read N- to C-terminus: Phospho-N-acetylmuramoyl-pentapeptide-transferase (361 aa).

Helical transmembrane passes span 25 to 45 (RGIL…PAVI), 73 to 93 (TMGG…WGDL), 98 to 118 (VWLV…DDWI), 139 to 159 (IFGL…AAIT), 168 to 188 (IALP…IVGF), 200 to 220 (GLAI…AYAS), 237 to 257 (AGEL…FLWF), 264 to 284 (VFMG…IAVI), 290 to 310 (VLVI…IQVV), and 339 to 359 (VIVR…ATLK).

It belongs to the glycosyltransferase 4 family. MraY subfamily. Mg(2+) serves as cofactor.

It is found in the cell inner membrane. The enzyme catalyses UDP-N-acetyl-alpha-D-muramoyl-L-alanyl-gamma-D-glutamyl-meso-2,6-diaminopimeloyl-D-alanyl-D-alanine + di-trans,octa-cis-undecaprenyl phosphate = di-trans,octa-cis-undecaprenyl diphospho-N-acetyl-alpha-D-muramoyl-L-alanyl-D-glutamyl-meso-2,6-diaminopimeloyl-D-alanyl-D-alanine + UMP. The protein operates within cell wall biogenesis; peptidoglycan biosynthesis. Its function is as follows. Catalyzes the initial step of the lipid cycle reactions in the biosynthesis of the cell wall peptidoglycan: transfers peptidoglycan precursor phospho-MurNAc-pentapeptide from UDP-MurNAc-pentapeptide onto the lipid carrier undecaprenyl phosphate, yielding undecaprenyl-pyrophosphoryl-MurNAc-pentapeptide, known as lipid I. This chain is Phospho-N-acetylmuramoyl-pentapeptide-transferase, found in Xanthomonas euvesicatoria pv. vesicatoria (strain 85-10) (Xanthomonas campestris pv. vesicatoria).